The primary structure comprises 199 residues: Recombination protein RecR (199 aa).

The C4-type zinc finger occupies 58–73 (CKTCGNIDTQSPCTVC). The Toprim domain maps to 81-176 (AMIVVVADVA…KVTRLAHGVP (96 aa)).

It belongs to the RecR family.

Its function is as follows. May play a role in DNA repair. It seems to be involved in an RecBC-independent recombinational process of DNA repair. It may act with RecF and RecO. This chain is Recombination protein RecR, found in Bradyrhizobium sp. (strain BTAi1 / ATCC BAA-1182).